We begin with the raw amino-acid sequence, 236 residues long: Hydantoin racemase (236 aa).

Homohexamer, homoheptamer or homooctamer.

It catalyses the reaction a D-5-monosubstituted hydantoin = a L-5-monosubstituted hydantoin. The enzyme catalyses D-5-benzylhydantoin = L-5-benzylhydantoin. Its activity is regulated as follows. Completely inhibited by HgCl(2) and iodoacetamide. Stimulated by dithiothreitol. In terms of biological role, involved in the asymmetric conversion of racemic 5-substituted hydantoins to the corresponding L-amino acids. Catalyzes the racemization via enolization of D- and L-5-monosubstituted hydantoins. It shows preference for hydantoins with arylalkyl side chains such as 5-benzylhydantoin (BH) and, to a lesser extent, 5-(3-indolylmethylene)hydantoin (IMH). The chain is Hydantoin racemase from Paenarthrobacter aurescens (Arthrobacter aurescens).